The sequence spans 253 residues: MNQPGETTHFGFRDVPLNDKQTMVNDVFHSVASRYDLMNDLMSGGMHRLWKDVMITTLNPPRDDAPFRLLDVAGGTGDISFRAAKASGAGFQATVCDINTDMLEVGRQRAVQRHLDGQVDFVEGNAEALQFPDRSYDAYTIAFGIRNVPRIDLALKEAYRVLKPGSRFLCLEFSSVDVPGLNKIYDLFSFKVIPEIGRVVTGDAESYQYLVESIRKFPKPYDFAEMMRDAGFARVNWQMMSGGIVALHSGWRL.

Residues Thr-76, Asp-97, and 125 to 126 (NA) contribute to the S-adenosyl-L-methionine site.

The protein belongs to the class I-like SAM-binding methyltransferase superfamily. MenG/UbiE family.

It catalyses the reaction a 2-demethylmenaquinol + S-adenosyl-L-methionine = a menaquinol + S-adenosyl-L-homocysteine + H(+). The enzyme catalyses a 2-methoxy-6-(all-trans-polyprenyl)benzene-1,4-diol + S-adenosyl-L-methionine = a 5-methoxy-2-methyl-3-(all-trans-polyprenyl)benzene-1,4-diol + S-adenosyl-L-homocysteine + H(+). The protein operates within quinol/quinone metabolism; menaquinone biosynthesis; menaquinol from 1,4-dihydroxy-2-naphthoate: step 2/2. It participates in cofactor biosynthesis; ubiquinone biosynthesis. In terms of biological role, methyltransferase required for the conversion of demethylmenaquinol (DMKH2) to menaquinol (MKH2) and the conversion of 2-polyprenyl-6-methoxy-1,4-benzoquinol (DDMQH2) to 2-polyprenyl-3-methyl-6-methoxy-1,4-benzoquinol (DMQH2). This is Ubiquinone/menaquinone biosynthesis C-methyltransferase UbiE from Rhodopseudomonas palustris (strain BisB5).